The chain runs to 724 residues: Eukaryotic elongation factor 2 kinase (724 aa).

An N-acetylalanine modification is found at alanine 2. Positions 11–35 are disordered; that stretch reads EGVDGGGSSGAGRHGDSDTDSDDDE. Residues 13 to 22 are compositionally biased toward gly residues; it reads VDGGGSSGAG. Phosphoserine occurs at positions 18, 27, 70, and 73. Serine 77 is subject to Phosphoserine; by autocatalysis and TRPM7. Positions 80–93 are calmodulin-binding; the sequence is FKEAWKHAIEKAKH. Residues 115–325 enclose the Alpha-type protein kinase domain; the sequence is RYNAVTGEWL…ICQSMGLAPF (211 aa). A Phosphoserine modification is found at serine 242. 295 to 301 lines the ATP pocket; it reads GDGNLGV. Threonine 347 carries the post-translational modification Phosphothreonine. Position 352 is a phosphothreonine; by autocatalysis (threonine 352). Positions 353-476 are disordered; that stretch reads EEKCGSPRIR…PESDEDSLGS (124 aa). Phosphoserine; by MAPK13 and CDK1 is present on serine 358. Residues 364-376 show a composition bias toward low complexity; it reads LSGSRPPLLLRLS. Phosphoserine is present on residues serine 365 and serine 391. Over residues 385–403 the composition is skewed to polar residues; that stretch reads SDVTFDSLPSSPSSATPHS. Residue serine 397 is modified to Phosphoserine; by AMPK. Basic and acidic residues-rich tracts occupy residues 421–435 and 444–468; these read GPRD…RDSE and SEKR…RRPE. 5 positions are modified to phosphoserine: serine 434, serine 444, serine 469, serine 473, and serine 476. At serine 499 the chain carries Phosphoserine; by PKA.

Belongs to the protein kinase superfamily. Alpha-type protein kinase family. Monomer or homodimer. Interacts with Calmodulin/CALM1; this interaction is strictly required for phosphorylation activity. In terms of processing, the N-terminus is blocked. Post-translationally, autophosphorylated at multiple residues, Thr-347 being the major site. Phosphorylated by AMP-activated protein kinase AMPK at Ser-397 leading to EEF2K activation and protein synthesis inhibition. Phosphorylated by TRPM7 at Ser-77 resulting in improved protein stability, higher EE2F phosphorylated and subsequently reduced rate of protein synthesis. Phosphorylation by other kinases such as CDK1 and MAPK13 at Ser-358 or RPS6KA1 and RPS6KB1 at Ser-365 instead decrease EEF2K activity and promote protein synthesis. As to expression, widely expressed, with high levels in reticulocytes and skeletal muscle.

The catalysed reaction is [translation elongation factor 2] + ATP = [translation elongation factor 2]-phosphate + ADP + H(+). With respect to regulation, undergoes calcium/calmodulin-dependent intramolecular autophosphorylation, and this results in it becoming partially calcium/calmodulin-independent. In terms of biological role, threonine kinase that regulates protein synthesis by controlling the rate of peptide chain elongation. Upon activation by a variety of upstream kinases including AMPK or TRPM7, phosphorylates the elongation factor EEF2 at a single site, renders it unable to bind ribosomes and thus inactive. In turn, the rate of protein synthesis is reduced. The chain is Eukaryotic elongation factor 2 kinase from Rattus norvegicus (Rat).